Reading from the N-terminus, the 205-residue chain is Anaerobic dimethyl sulfoxide reductase chain B (205 aa).

4Fe-4S ferredoxin-type domains are found at residues 4 to 32 (YGFY…LGTE), 57 to 89 (NIFA…KNAD), and 90 to 119 (GFVI…YDAQ). [4Fe-4S] cluster is bound by residues cysteine 13, cysteine 16, cysteine 19, cysteine 23, cysteine 67, cysteine 70, cysteine 75, cysteine 79, cysteine 99, cysteine 102, cysteine 105, cysteine 109, cysteine 126, cysteine 129, cysteine 141, and cysteine 145.

Heterotrimeric enzyme composed of a catalytic heterodimer (DmsAB) and a membrane anchor protein (DmsC). Requires [4Fe-4S] cluster as cofactor.

Functionally, electron transfer subunit of the terminal reductase during anaerobic growth on various sulfoxide and N-oxide compounds. The polypeptide is Anaerobic dimethyl sulfoxide reductase chain B (dmsB) (Haemophilus influenzae (strain ATCC 51907 / DSM 11121 / KW20 / Rd)).